Consider the following 386-residue polypeptide: 23S rRNA (uracil(747)-C(5))-methyltransferase RlmC (386 aa).

[4Fe-4S] cluster is bound by residues C7, C15, C18, and C94. Residues Q219, F248, E269, and N316 each coordinate S-adenosyl-L-methionine. C343 acts as the Nucleophile in catalysis.

It belongs to the class I-like SAM-binding methyltransferase superfamily. RNA M5U methyltransferase family. RlmC subfamily.

The enzyme catalyses uridine(747) in 23S rRNA + S-adenosyl-L-methionine = 5-methyluridine(747) in 23S rRNA + S-adenosyl-L-homocysteine + H(+). Its function is as follows. Catalyzes the formation of 5-methyl-uridine at position 747 (m5U747) in 23S rRNA. In Shewanella oneidensis (strain ATCC 700550 / JCM 31522 / CIP 106686 / LMG 19005 / NCIMB 14063 / MR-1), this protein is 23S rRNA (uracil(747)-C(5))-methyltransferase RlmC.